We begin with the raw amino-acid sequence, 128 residues long: Probable soluble cytochrome b562 2 (128 aa).

An N-terminal signal peptide occupies residues 1 to 22 (MGKTLMALITAALLSTSSLVMA). The heme b site is built by methionine 29 and histidine 124.

This sequence belongs to the cytochrome b562 family. Heme b is required as a cofactor.

The protein localises to the periplasm. Functionally, electron-transport protein of unknown function. This Yersinia pestis protein is Probable soluble cytochrome b562 2 (cybC2).